A 427-amino-acid chain; its full sequence is NADPH-dependent stearoyl-CoA 9-desaturase (427 aa).

Fe cation is bound by residues H90, H94, H125, H129, H130, H304, H308, and H309.

Belongs to the fatty acid desaturase type 1 family. In terms of assembly, interacts with the electron transfer protein Rv3230c to form a functional acyl-CoA desaturase complex. It depends on Fe(2+) as a cofactor. Post-translationally, is rapidly degraded by a mycobacterial protein degradation system that specifically targets the residues LAA at the C-terminus, leading to a post-translational proteolytic regulation of DesA3 essential activity.

It is found in the cell membrane. It catalyses the reaction octadecanoyl-CoA + NADPH + O2 + H(+) = (9Z)-octadecenoyl-CoA + NADP(+) + 2 H2O. It functions in the pathway lipid metabolism; fatty acid metabolism. Functionally, is likely involved in the aerobic desaturation system responsible for the synthesis of oleic acid from stearoyl-CoA; oleic acid is a precursor of mycobacterial membrane phospholipids and triglycerides. Catalyzes the conversion of stearoyl-CoA to oleoyl-CoA by introduction of a cis double bond between carbons 9 and 10 of the acyl chain. Requires the electron transfer partner Rv3230c to pass two electrons from NADPH to its active site diiron center. Is also able to catalyze the 9-desaturation of palmitoyl-CoA to palmitoleoyl-CoA. The polypeptide is NADPH-dependent stearoyl-CoA 9-desaturase (desA3) (Mycobacterium tuberculosis (strain CDC 1551 / Oshkosh)).